Here is a 127-residue protein sequence, read N- to C-terminus: Histone H2B type 1-A (127 aa).

Pro-2 carries the N-acetylproline modification. N6-acetyllysine; alternate occurs at positions 7, 13, 14, 17, 18, 22, and 25. N6-crotonyllysine; alternate occurs at positions 7, 13, 14, 17, 18, 22, 25, and 36. 2 positions are modified to N6-lactoyllysine; alternate: Lys-7 and Lys-13. Residue Lys-7 forms a Glycyl lysine isopeptide (Lys-Gly) (interchain with G-Cter in SUMO2); alternate linkage. Residues Lys-17, Lys-18, Lys-22, and Lys-25 each carry the N6-lactoyllysine; alternate modification. A Glycyl lysine isopeptide (Lys-Gly) (interchain with G-Cter in SUMO2); alternate cross-link involves residue Lys-22. Lys-36 bears the N6-succinyllysine; alternate mark. A Glycyl lysine isopeptide (Lys-Gly) (interchain with G-Cter in ubiquitin); alternate cross-link involves residue Lys-36. Ser-38 bears the Phosphoserine mark. Residue Lys-45 is modified to N6-lactoyllysine; alternate. The residue at position 48 (Lys-48) is an N6-methyllysine. Position 59 is an N6,N6-dimethyllysine (Lys-59). Arg-81 bears the Dimethylated arginine mark. The residue at position 87 (Lys-87) is an N6-acetyllysine; alternate. Lys-87 bears the N6-lactoyllysine; alternate mark. N6,N6,N6-trimethyllysine; alternate is present on Lys-87. Arg-88 and Arg-94 each carry omega-N-methylarginine. Lys-110 bears the N6-lactoyllysine; alternate mark. Lys-110 is modified (N6-methyllysine). Thr-117 carries the post-translational modification Phosphothreonine. 2 positions are modified to N6-lactoyllysine; alternate: Lys-118 and Lys-122. An N6-succinyllysine; alternate mark is found at Lys-118 and Lys-122. Lys-118 is subject to N6-methylated lysine; alternate. Lys-122 is covalently cross-linked (Glycyl lysine isopeptide (Lys-Gly) (interchain with G-Cter in ubiquitin); alternate).

The protein belongs to the histone H2B family. As to quaternary structure, the nucleosome is a histone octamer containing two molecules each of H2A, H2B, H3 and H4 assembled in one H3-H4 heterotetramer and two H2A-H2B heterodimers. Interacts with H2AB1; preferentially dimerizes with H2AB1 to form nucleosomes. In terms of processing, monoubiquitination at Lys-36 by the MSL1/MSL2 dimer is required for histone H3 'Lys-4' (H3K4me) and 'Lys-79' (H3K79me) methylation and transcription activation at specific gene loci, such as HOXA9 and MEIS1 loci. Similarly, monoubiquitination of Lys-122 (H2BK120Ub) by the RNF20/40 complex gives a specific tag for epigenetic transcriptional activation and is also prerequisite for histone H3 'Lys-4' and 'Lys-79' methylation. It also functions cooperatively with the FACT dimer to stimulate elongation by RNA polymerase II. H2BK120Ub also acts as a regulator of mRNA splicing: deubiquitination by USP49 is required for efficient cotranscriptional splicing of a large set of exons. Crotonylation (Kcr) is specifically present in male germ cells and marks testis-specific genes in post-meiotic cells, including X-linked genes that escape sex chromosome inactivation in haploid cells. Crotonylation marks active promoters and enhancers and confers resistance to transcriptional repressors. It is also associated with post-meiotically activated genes on autosomes. Post-translationally, acetylated during spermatogenesis. Acetylated form is most abundant in spermatogonia compared to spermatocytes and round spermatids. In terms of processing, phosphorylated at Thr-117 in spermatogonia, spermatocytes and round spermatids. Methylated at Lys-118 in spermatogonia, spermatocytes and round spermatids. Post-translationally, lactylated in macrophages by EP300/P300 by using lactoyl-CoA directly derived from endogenous or exogenous lactate, leading to stimulates gene transcription. Mainly expressed in testis, and the corresponding protein is also present in mature sperm. Also present in metaphase oocytes (at protein level).

The protein resides in the nucleus. It localises to the chromosome. Variant histone specifically required to direct the transformation of dissociating nucleosomes to protamine in male germ cells. Entirely replaces classical histone H2B prior nucleosome to protamine transition and probably acts as a nucleosome dissociating factor that creates a more dynamic chromatin, facilitating the large-scale exchange of histones. In condensing spermatids, the heterodimer between H2AB1 and H2BC1/TH2B is loaded onto the nucleosomes and promotes loading of transition proteins (TNP1 and TNP2) onto the nucleosomes. Inclusion of the H2AB1-H2BC1/TH2B dimer into chromatin opens the nucleosomes, releasing the nucleosomal DNA ends and allowing the invasion of nucleosomes by transition proteins (TNP1 and TNP2). Then, transition proteins drive the recruitment and processing of protamines, which are responsible for histone eviction. Also expressed maternally and is present in the female pronucleus, suggesting a similar role in protamine replacement by nucleosomes at fertilization. Core component of nucleosome. Nucleosomes wrap and compact DNA into chromatin, limiting DNA accessibility to the cellular machineries which require DNA as a template. Histones thereby play a central role in transcription regulation, DNA repair, DNA replication and chromosomal stability. DNA accessibility is regulated via a complex set of post-translational modifications of histones, also called histone code, and nucleosome remodeling. In Mus musculus (Mouse), this protein is Histone H2B type 1-A.